The chain runs to 242 residues: 1-(5-phosphoribosyl)-5-[(5-phosphoribosylamino)methylideneamino] imidazole-4-carboxamide isomerase (242 aa).

Asp8 serves as the catalytic Proton acceptor. The active-site Proton donor is the Asp129.

The protein belongs to the HisA/HisF family.

It localises to the cytoplasm. The catalysed reaction is 1-(5-phospho-beta-D-ribosyl)-5-[(5-phospho-beta-D-ribosylamino)methylideneamino]imidazole-4-carboxamide = 5-[(5-phospho-1-deoxy-D-ribulos-1-ylimino)methylamino]-1-(5-phospho-beta-D-ribosyl)imidazole-4-carboxamide. Its pathway is amino-acid biosynthesis; L-histidine biosynthesis; L-histidine from 5-phospho-alpha-D-ribose 1-diphosphate: step 4/9. The sequence is that of 1-(5-phosphoribosyl)-5-[(5-phosphoribosylamino)methylideneamino] imidazole-4-carboxamide isomerase from Clostridium botulinum (strain ATCC 19397 / Type A).